A 447-amino-acid polypeptide reads, in one-letter code: T-box transcription factor TBX20 (447 aa).

The segment at 62 to 81 (DAHGEFGGGSGSSPSSSSLC) is disordered. The segment at residues 109 to 288 (LWDKFHELGT…SNPFAKGFRD (180 aa)) is a DNA-binding region (T-box). A disordered region spans residues 316–340 (TYGGEEDVLGDESQTTPNRGSAFTT). Residues 327–340 (ESQTTPNRGSAFTT) are compositionally biased toward polar residues.

The protein localises to the nucleus. In terms of biological role, acts as a transcriptional activator and repressor required for cardiac development and may have key roles in the maintenance of functional and structural phenotypes in adult heart. The chain is T-box transcription factor TBX20 (TBX20) from Homo sapiens (Human).